The sequence spans 147 residues: MGEVKGKWTPKLERFVDEYFINGMNATKAAIAAGYSKKSASTIAAENMQKPHVRARIEERLAQMDKKRIMQAEEVLEHLTRIALGQEKEQVLMGIGKGAETKTHVEVSAKDRIKALELLGKAHAVFTDKQKVETNQVIIVDDSGDAE.

The interval 25-50 (NATKAAIAAGYSKKSASTIAAENMQK) is helix-turn-helix (HTH).

This sequence belongs to the SPP1-like small terminase family. Homodecamer. Interacts with the terminase large subunit gp2; the active complex is probably composed of a one monomer of gp2 and two or more decamers of gp1.

The terminase small subunit specifically recognizes the non-adjacent pacL and pacR packaging subsites and regulates the ATPase activity of the terminase large subunit. The terminase lies at a unique vertex of the procapsid and is composed of two subunits, a small terminase subunit involved in viral DNA recognition (packaging 'pac' sequence), and a large terminase subunit possessing endonucleolytic and ATPase activities. Both terminase subunits heterooligomerize and are docked on the portal protein to form the packaging machine. The terminase large subunit exhibits endonuclease activity and cleaves the viral genome concatemer once the capsid is full (headful packaging). Once the capsid is packaged with the DNA, the terminase complex is substituted by neck proteins. This Bacillus subtilis (Bacteriophage SPP1) protein is Terminase small subunit (1).